A 498-amino-acid polypeptide reads, in one-letter code: UDP-N-acetylmuramate--L-alanine ligase (498 aa).

120–126 (GSHGKTT) contacts ATP.

It belongs to the MurCDEF family.

Its subcellular location is the cytoplasm. It catalyses the reaction UDP-N-acetyl-alpha-D-muramate + L-alanine + ATP = UDP-N-acetyl-alpha-D-muramoyl-L-alanine + ADP + phosphate + H(+). It functions in the pathway cell wall biogenesis; peptidoglycan biosynthesis. Functionally, cell wall formation. This chain is UDP-N-acetylmuramate--L-alanine ligase, found in Rickettsia typhi (strain ATCC VR-144 / Wilmington).